The sequence spans 398 residues: MNIHEYQAKRLLHTYGAPIANGVAVYSVEQAEEWAKTLPGPLYVVKSQIHAGGRGKGKFKELPADAKGGVRLAKSVEEVVANAKEMLGNTLVTKQTGEAGKQVNRLYIEDGADIERELYLSILIDRSVGRPAFVVSTEGGMDIEAVAEETPEKIVTVAIDPAKGVTDEDANKLADALKLEGGAREDGLKLFPILYKAFTEKDMSLLEINPLIVMTNGRVRVLDAKVSFDNNALFRHPDIVELRDLTEEDPKEIEASKYDLAYVALDGNIGCMVNGAGLAMATMDIIKLYGAEPANFLDVGGGASKEKVTAAFKIITADPAVEGILVNIFGGIMKCDVIAEGVIAAVKEVGLKVPLVVRLEGTNVELGKKIINESGLNVISADDLDDAAQKIVAAVKGN.

The ATP-grasp domain maps to 9 to 254; it reads KRLLHTYGAP…LTEEDPKEIE (246 aa). ATP is bound by residues Lys-46, 53-55, Glu-109, Ala-112, and Glu-117; that span reads GRG. Positions 209 and 223 each coordinate Mg(2+). Substrate contacts are provided by residues Asn-274 and 331 to 333; that span reads GIM.

Belongs to the succinate/malate CoA ligase beta subunit family. In terms of assembly, heterotetramer of two alpha and two beta subunits. Mg(2+) serves as cofactor.

The catalysed reaction is succinate + ATP + CoA = succinyl-CoA + ADP + phosphate. It catalyses the reaction GTP + succinate + CoA = succinyl-CoA + GDP + phosphate. The protein operates within carbohydrate metabolism; tricarboxylic acid cycle; succinate from succinyl-CoA (ligase route): step 1/1. Succinyl-CoA synthetase functions in the citric acid cycle (TCA), coupling the hydrolysis of succinyl-CoA to the synthesis of either ATP or GTP and thus represents the only step of substrate-level phosphorylation in the TCA. The beta subunit provides nucleotide specificity of the enzyme and binds the substrate succinate, while the binding sites for coenzyme A and phosphate are found in the alpha subunit. This chain is Succinate--CoA ligase [ADP-forming] subunit beta, found in Brucella abortus (strain S19).